The following is a 245-amino-acid chain: tRNA1(Val) (adenine(37)-N6)-methyltransferase (245 aa).

The protein belongs to the methyltransferase superfamily. tRNA (adenine-N(6)-)-methyltransferase family.

It is found in the cytoplasm. The catalysed reaction is adenosine(37) in tRNA1(Val) + S-adenosyl-L-methionine = N(6)-methyladenosine(37) in tRNA1(Val) + S-adenosyl-L-homocysteine + H(+). Specifically methylates the adenine in position 37 of tRNA(1)(Val) (anticodon cmo5UAC). The protein is tRNA1(Val) (adenine(37)-N6)-methyltransferase of Escherichia coli O7:K1 (strain IAI39 / ExPEC).